A 708-amino-acid polypeptide reads, in one-letter code: Ion-translocating oxidoreductase complex subunit C (708 aa).

2 4Fe-4S ferredoxin-type domains span residues 369-397 (GEPQ…QQLY) and 407-436 (KATT…VQYF). [4Fe-4S] cluster-binding residues include cysteine 377, cysteine 380, cysteine 383, cysteine 387, cysteine 416, cysteine 419, cysteine 422, and cysteine 426. The segment at 630 to 682 (AKARKLEQQQANAEPEEQIDPRKAAVEAAIARAKARKLEQQQANAEPEEQIDP) is disordered.

This sequence belongs to the 4Fe4S bacterial-type ferredoxin family. RnfC subfamily. In terms of assembly, the complex is composed of six subunits: RsxA, RsxB, RsxC, RsxD, RsxE and RsxG. The cofactor is [4Fe-4S] cluster.

Its subcellular location is the cell inner membrane. Its function is as follows. Part of a membrane-bound complex that couples electron transfer with translocation of ions across the membrane. Required to maintain the reduced state of SoxR. In Escherichia coli (strain UTI89 / UPEC), this protein is Ion-translocating oxidoreductase complex subunit C.